Reading from the N-terminus, the 533-residue chain is Na(+)/H(+) antiporter NhaB (533 aa).

10 helical membrane passes run 28-50, 67-87, 96-116, 131-165, 254-274, 316-336, 364-384, 396-416, 454-474, and 481-501; these read FLII…VLVL, PGGL…SQVL, VLLL…LLLF, VSLM…FYSI, VPVL…GIFG, LIAG…SVII, LAVF…APVI, LVIF…VFVG, ATPN…APLI, and MVWM…MAIQ.

The protein belongs to the NhaB Na(+)/H(+) (TC 2.A.34) antiporter family.

The protein resides in the cell inner membrane. The enzyme catalyses 2 Na(+)(in) + 3 H(+)(out) = 2 Na(+)(out) + 3 H(+)(in). In terms of biological role, na(+)/H(+) antiporter that extrudes sodium in exchange for external protons. This chain is Na(+)/H(+) antiporter NhaB, found in Shewanella baltica (strain OS195).